The primary structure comprises 413 residues: Histidine--tRNA ligase (413 aa).

The protein belongs to the class-II aminoacyl-tRNA synthetase family. As to quaternary structure, homodimer.

The protein resides in the cytoplasm. It catalyses the reaction tRNA(His) + L-histidine + ATP = L-histidyl-tRNA(His) + AMP + diphosphate + H(+). This Geobacter metallireducens (strain ATCC 53774 / DSM 7210 / GS-15) protein is Histidine--tRNA ligase.